The sequence spans 723 residues: Solute carrier organic anion transporter family member 4A1 (723 aa).

Residues 1 to 102 (MPQHAMGDTH…KCLQVFNTPK (102 aa)) are Cytoplasmic-facing. Positions 23–64 (SSATDSGCDTPPSSRASPASLRSAHGTLGSSSQPLFEPQAEK) are disordered. Over residues 33–46 (PPSSRASPASLRSA) the composition is skewed to low complexity. Phosphoserine is present on residues Ser-39, Ser-42, and Ser-45. Residues 103–123 (GFLFFLCAASFLQGMTVNGFI) form a helical membrane-spanning segment. Over 124–142 (NTVITSIERRFDLHSYQSG) the chain is Extracellular. The helical transmembrane segment at 143-163 (LIASSYDIAACLCLTFVSYFG) threads the bilayer. Over 164 to 169 (GNGHKP) the chain is Cytoplasmic. A helical membrane pass occupies residues 170 to 194 (RWLGWGVLVLGIGSLVFALPHFTAG). At 195-224 (RYEVEMDEGLGTGTCLTNQSHVECKDSASG) the chain is on the extracellular side. Asn-212 is a glycosylation site (N-linked (GlcNAc...) asparagine). The helical transmembrane segment at 225-255 (LSNYRLIFMLGQLLHGVGATPLYTLGVTYLD) threads the bilayer. The Cytoplasmic portion of the chain corresponds to 256–274 (ENVKSSYSPIYIAIFYTAA). A helical membrane pass occupies residues 275 to 295 (ILGPAAGYLIGGAMLNVYTEV). Topologically, residues 296 to 309 (GQRTELTTDSPLWV) are extracellular. A helical membrane pass occupies residues 310–334 (GAWWIGFLGTGIAAFLIAIPILGYP). At 335-380 (RQLPGSQRYVVMRAAETQQLKDHSRGAVSNPAFGKTVRDLPLSIWL) the chain is on the cytoplasmic side. The helical transmembrane segment at 381-402 (LLRNPTFILLCLAGATEATLIA) threads the bilayer. Residues 403 to 422 (GMSTFGPKFFEAQFSLSASE) lie on the Extracellular side of the membrane. The helical transmembrane segment at 423-446 (AATLFGYLVVPAGGGGTLLGGFLV) threads the bilayer. Residues 447-450 (NKFK) are Cytoplasmic-facing. A helical membrane pass occupies residues 451 to 473 (LRGSGIIRFCLFCTLTSLLAFFV). At 474-582 (FLMHCPNVHM…ASTCQSKPFL (109 aa)) the chain is on the extracellular side. One can recognise a Kazal-like domain in the interval 500-557 (LDLKAACNAIYCCQPKHYSPLCGSDGTMYYSPCYAGCPADAETDLGGQKVYRGCSCIL). Disulfide bonds link Cys-506–Cys-536 and Cys-521–Cys-555. An N-linked (GlcNAc...) asparagine glycan is attached at Asn-566. A helical membrane pass occupies residues 583–605 (LVLVFVVIIFTFLSSIPALTATL). Residues 606-614 (RCVSDRQRS) are Cytoplasmic-facing. The chain crosses the membrane as a helical span at residues 615-640 (FALGIQWIVVRTLGSIPGPIAFGWVI). Residues 641-673 (DKACLLWQDQCGHQGSCFVYENEAMSRYMLIAG) lie on the Extracellular side of the membrane. A helical membrane pass occupies residues 674 to 691 (LTFKVLGFLFFVAAYFLY). Residues 692 to 723 (KSPSVSSDGLEASLPSQSSASDSPTEQLQSNV) lie on the Cytoplasmic side of the membrane. Positions 700–723 (GLEASLPSQSSASDSPTEQLQSNV) are disordered. The span at 701 to 723 (LEASLPSQSSASDSPTEQLQSNV) shows a compositional bias: low complexity.

Belongs to the organo anion transporter (TC 2.A.60) family.

Its subcellular location is the cell membrane. The catalysed reaction is 3,3',5-triiodo-L-thyronine(out) + L-glutamate(in) = 3,3',5-triiodo-L-thyronine(in) + L-glutamate(out). The enzyme catalyses L-thyroxine(out) + L-glutamate(in) = L-thyroxine(in) + L-glutamate(out). It carries out the reaction estrone 3-sulfate(out) + L-glutamate(in) = estrone 3-sulfate(in) + L-glutamate(out). It catalyses the reaction taurocholate(out) + L-glutamate(in) = taurocholate(in) + L-glutamate(out). The catalysed reaction is 3,3',5-triiodo-L-thyronine(out) = 3,3',5-triiodo-L-thyronine(in). The enzyme catalyses L-thyroxine(out) = L-thyroxine(in). It carries out the reaction 3,3',5'-triiodo-L-thyronine(out) = 3,3',5'-triiodo-L-thyronine(in). It catalyses the reaction estrone 3-sulfate(out) = estrone 3-sulfate(in). The catalysed reaction is 17beta-estradiol 17-O-(beta-D-glucuronate)(out) = 17beta-estradiol 17-O-(beta-D-glucuronate)(in). The enzyme catalyses taurocholate(out) = taurocholate(in). It carries out the reaction prostaglandin E2(out) = prostaglandin E2(in). Functionally, organic anion antiporter with apparent broad substrate specificity. Recognizes various substrates including thyroid hormones 3,3',5-triiodo-L-thyronine (T3), L-thyroxine (T4) and 3,3',5'-triiodo-L-thyronine (rT3), conjugated steroids such as estrone 3-sulfate and estradiol 17-beta glucuronide, bile acids such as taurocholate and prostanoids such as prostaglandin E2, likely operating in a tissue-specific manner. May be involved in uptake of metabolites from the circulation into organs such as kidney, liver or placenta. Possibly drives the selective transport of thyroid hormones and estrogens coupled to an outward glutamate gradient across the microvillous membrane of the placenta. The transport mechanism, its electrogenicity and potential tissue-specific counterions remain to be elucidated. The protein is Solute carrier organic anion transporter family member 4A1 (Slco4a1) of Mus musculus (Mouse).